Here is a 420-residue protein sequence, read N- to C-terminus: Pre-mRNA-splicing factor RBM22 (420 aa).

The residue at position 2 (A2) is an N-acetylalanine. Phosphoserine occurs at positions 4 and 102. Glycyl lysine isopeptide (Lys-Gly) (interchain with G-Cter in SUMO2) cross-links involve residues K139 and K149. A C3H1-type zinc finger spans residues 159–186 (RNRPHICSFWVKGECKRGEECPYRHEKP). Residue K212 is modified to N6-acetyllysine. One can recognise an RRM domain in the interval 232–305 (TTLYVGGLGD…RRLNVKWGRS (74 aa)). K290 participates in a covalent cross-link: Glycyl lysine isopeptide (Lys-Gly) (interchain with G-Cter in SUMO2). 2 disordered regions span residues 303-343 (GRSQ…AAEE) and 372-420 (APPP…HSSP). Residues 309-318 (RGKEKEKDGT) are compositionally biased toward basic and acidic residues.

Belongs to the SLT11 family. As to quaternary structure, component of the pre-catalytic and catalytic spliceosome complexes. Component of the postcatalytic spliceosome P complex. Interacts with PDCD6; the interaction induces translocation of PDCD6 in the cytoplasm. Interacts with PPIL1.

Its subcellular location is the nucleus. It is found in the cytoplasm. Functionally, required for pre-mRNA splicing as component of the activated spliceosome. Involved in the first step of pre-mRNA splicing. Binds directly to the internal stem-loop (ISL) domain of the U6 snRNA and to the pre-mRNA intron near the 5' splice site during the activation and catalytic phases of the spliceosome cycle. Involved in both translocations of the nuclear SLU7 to the cytoplasm and the cytosolic calcium-binding protein PDCD6 to the nucleus upon cellular stress responses. The chain is Pre-mRNA-splicing factor RBM22 (RBM22) from Bos taurus (Bovine).